The chain runs to 427 residues: MLNPYLLRNQIDAISKKLLKKKFKLDISLISSLEKKRKKLQIKTDNLQYKHNTLSALFKKEKKIQELDENLKRTLTKSSKNLSELKIELNLLQEKIHNFSLSIPNIPSDDVPEGNSSENNKIVKYWGKKREYSFAVRDHVEIGNKLNQLDWKSSAKISGARFIVMKGNIALLHRALSQFMLDLHTIKHGYTETYVPYLVNHDSLYGTGQLPKFTDDLFHINSIDKKKYVLIPTAEVPLTNLFSNQILNETELPIMLTAHTPCFRSEASSYGRDSKGLIRLHQFDKVELVQIIQPELSMNALELLTHHAEKVLQLLELPYRKVLLCGGEMGFSATKTYDLEVWFPSQKKYREISSCSNMSDFQARRMKTRYKKKKEKSNSFVHTLNGSGLAIGRTLAAILENYQDSDGRVTIPKILQKKYMQGIEYIN.

233 to 235 (TAE) serves as a coordination point for L-serine. ATP is bound at residue 264–266 (RSE). Residue Glu287 coordinates L-serine. An ATP-binding site is contributed by 351–354 (EISS). Ser387 contributes to the L-serine binding site.

This sequence belongs to the class-II aminoacyl-tRNA synthetase family. Type-1 seryl-tRNA synthetase subfamily. In terms of assembly, homodimer. The tRNA molecule binds across the dimer.

The protein resides in the cytoplasm. It catalyses the reaction tRNA(Ser) + L-serine + ATP = L-seryl-tRNA(Ser) + AMP + diphosphate + H(+). The enzyme catalyses tRNA(Sec) + L-serine + ATP = L-seryl-tRNA(Sec) + AMP + diphosphate + H(+). It functions in the pathway aminoacyl-tRNA biosynthesis; selenocysteinyl-tRNA(Sec) biosynthesis; L-seryl-tRNA(Sec) from L-serine and tRNA(Sec): step 1/1. Functionally, catalyzes the attachment of serine to tRNA(Ser). Is also able to aminoacylate tRNA(Sec) with serine, to form the misacylated tRNA L-seryl-tRNA(Sec), which will be further converted into selenocysteinyl-tRNA(Sec). The polypeptide is Serine--tRNA ligase (Buchnera aphidicola subsp. Schizaphis graminum (strain Sg)).